The sequence spans 442 residues: Meiosis-specific with OB domain-containing protein (442 aa).

Positions 167-272 (IINVLAAVKS…EANILLNFIR (106 aa)) form a DNA-binding region, OB.

It belongs to the MEIOB family. Component of a multiprotein complex with RPA2 and SPATA22. Interacts with SPATA22. Interacts with the complex BRME1:HSF2BP:BRCA2. In fetal gonads, specifically expressed in the ovary starting at the 14th weeks post fertilization. In the adult, restricted to testis.

It is found in the cytoplasm. The protein resides in the nucleus. The protein localises to the chromosome. In terms of biological role, single-stranded DNA-binding protein required for homologous recombination in meiosis I. Required for double strand breaks (DSBs) repair and crossover formation and promotion of faithful and complete synapsis. Not required for the initial loading of recombinases but required to maintain a proper number of RAD51 and DMC1 foci after the zygotene stage. May act by ensuring the stabilization of recombinases, which is required for successful homology search and meiotic recombination. Displays Single-stranded DNA 3'-5' exonuclease activity in vitro. This is Meiosis-specific with OB domain-containing protein from Homo sapiens (Human).